A 166-amino-acid chain; its full sequence is Protein-export protein SecB (166 aa).

It belongs to the SecB family. Homotetramer, a dimer of dimers. One homotetramer interacts with 1 SecA dimer.

It is found in the cytoplasm. Functionally, one of the proteins required for the normal export of preproteins out of the cell cytoplasm. It is a molecular chaperone that binds to a subset of precursor proteins, maintaining them in a translocation-competent state. It also specifically binds to its receptor SecA. The polypeptide is Protein-export protein SecB (Sinorhizobium fredii (strain NBRC 101917 / NGR234)).